The primary structure comprises 460 residues: Probable carboxypeptidase TRV_02791 (460 aa).

The N-terminal stretch at 1 to 22 is a signal peptide; it reads MQKTYLWALVSLLASSLVDARS. Residue asparagine 98 is glycosylated (N-linked (GlcNAc...) asparagine). Aspartate 175 is a binding site for Zn(2+). Glutamate 207 serves as the catalytic Proton acceptor. Glutamate 208 provides a ligand contact to Zn(2+). An N-linked (GlcNAc...) asparagine glycan is attached at asparagine 395.

It belongs to the peptidase M20A family. The cofactor is Zn(2+).

Its subcellular location is the secreted. The sequence is that of Probable carboxypeptidase TRV_02791 from Trichophyton verrucosum (strain HKI 0517).